Reading from the N-terminus, the 497-residue chain is Intermediate filament protein A (497 aa).

A coil 1A region spans residues 1–32 (MSDLNDRLASYIEKVRFLEAQNRKLAADLDLL). An IF rod domain is found at 1–342 (MSDLNDRLAS…KMLEGEENRA (342 aa)). The interval 33 to 46 (RGRWGKDTLSVRAM) is linker 1. The tract at residues 47–184 (YEGELQEARK…RVHDQEIAEL (138 aa)) is coil 1B. The segment at 185 to 202 (QAMASRDTTPENREYFKN) is linker 12. Positions 203–342 (ELASAIRDIR…KMLEGEENRA (140 aa)) are coil 2. Residues 343–497 (GLRQLVEQVV…THIQRSSHTI (155 aa)) are tail. In terms of domain architecture, LTD spans 375-493 (SRTSFQRSAK…EERATHIQRS (119 aa)).

The protein belongs to the intermediate filament family. As to quaternary structure, a and B can form homopolymers. As to expression, giant body muscle cells.

The protein resides in the cytoplasm. The protein is Intermediate filament protein A of Ascaris suum (Pig roundworm).